We begin with the raw amino-acid sequence, 114 residues long: Putative membrane protein insertion efficiency factor (114 aa).

This sequence belongs to the UPF0161 family.

The protein localises to the cell inner membrane. Its function is as follows. Could be involved in insertion of integral membrane proteins into the membrane. This Wolinella succinogenes (strain ATCC 29543 / DSM 1740 / CCUG 13145 / JCM 31913 / LMG 7466 / NCTC 11488 / FDC 602W) (Vibrio succinogenes) protein is Putative membrane protein insertion efficiency factor.